The sequence spans 349 residues: Hypoxia-inducible factor 1-alpha inhibitor (349 aa).

A compositionally biased stretch (low complexity) spans 1–10; that stretch reads MAATAAEAVA. The interval 1 to 51 is disordered; sequence MAATAAEAVASGSGEPREEAGALGPAWDESQLRSYSFPTRPIPRLSQSDPR. The residue at position 2 (Ala2) is an N-acetylalanine. The tract at residues 2–125 is interaction with VHL; it reads AATAAEAVAS…PRSNREEMKF (124 aa). A JmjC domain is found at 142-312; the sequence is ERLYLQQTLN…PKRIEYPLKA (171 aa). Residue Tyr145 coordinates 2-oxoglutarate. Substrate-binding positions include Asp152 and 181–183; that span reads QLT. Thr196 contacts 2-oxoglutarate. Residues His199 and Asp201 each coordinate Fe cation. 201–203 contributes to the substrate binding site; the sequence is DEQ. Positions 205 and 214 each coordinate 2-oxoglutarate. 238–239 is a binding site for substrate; that stretch reads RQ. His279 contacts Fe cation. Residue Asn294 coordinates 2-oxoglutarate. Substrate is bound by residues Ala300 and Asn321.

In terms of assembly, homodimer; homodimerization is essential for catalytic activity. Interacts with VHL and HIF1A. Part of a complex with VHL, HIF1A and HDAC1 or HDAC2 or HDAC3. Interacts with NFKB1 and NFKBIA. Interacts with NOTCH1, NOTCH2 and NOTCH3 but not with NOTCH4. Interacts with APBA3; binding inhibits HIF1AN binding to HIF1A. Interacts with TNKS2. Interacts with PPP1R12A. Interacts with ASB4. Interacts with UBE3A. Interacts with ANKS3. Interacts with NECAB3; the interaction is indirect and seems to be mediated by APBA3. Requires Fe(2+) as cofactor.

The protein localises to the nucleus. Its subcellular location is the cytoplasm. It is found in the perinuclear region. It carries out the reaction L-asparaginyl-[hypoxia-inducible factor alpha subunit] + 2-oxoglutarate + O2 = (3S)-3-hydroxy-L-asparaginyl-[hypoxia-inducible factor alpha subunit] + succinate + CO2. It catalyses the reaction L-histidyl-[ankyrin-repeat domain protein] + 2-oxoglutarate + O2 = (3S)-3-hydroxy-L-histidyl-[ankyrin-repeat domain protein] + succinate + CO2. The catalysed reaction is L-asparaginyl-[ankyrin-repeat domain protein] + 2-oxoglutarate + O2 = (3S)-3-hydroxy-L-asparaginyl-[ankyrin-repeat domain protein] + succinate + CO2. The enzyme catalyses L-aspartyl-[ankyrin-repeat domain protein] + 2-oxoglutarate + O2 = (3S)-3-hydroxy-L-aspartyl-[ankyrin-repeat domain protein] + succinate + CO2. Hydroxylates HIF-1 alpha at 'Asn-803' in the C-terminal transactivation domain (CAD). Functions as an oxygen sensor and, under normoxic conditions, the hydroxylation prevents interaction of HIF-1 with transcriptional coactivators including Cbp/p300-interacting transactivator. Involved in transcriptional repression through interaction with HIF1A, VHL and histone deacetylases. Hydroxylates specific Asn residues within ankyrin repeat domains (ARD) of NFKB1, NFKBIA, NOTCH1, ASB4, PPP1R12A and several other ARD-containing proteins. Also hydroxylates Asp and His residues within ARDs of ANK1 and TNKS2, respectively. Negatively regulates NOTCH1 activity, accelerating myogenic differentiation. Positively regulates ASB4 activity, promoting vascular differentiation. This is Hypoxia-inducible factor 1-alpha inhibitor (HIF1AN) from Homo sapiens (Human).